Consider the following 331-residue polypeptide: Adenosine deaminase (331 aa).

Zn(2+) is bound by residues H12 and H14. Residues H14, D16, and G170 each coordinate substrate. H197 serves as a coordination point for Zn(2+). The active-site Proton donor is E200. D278 provides a ligand contact to Zn(2+). D279 contributes to the substrate binding site.

It belongs to the metallo-dependent hydrolases superfamily. Adenosine and AMP deaminases family. Adenosine deaminase subfamily. It depends on Zn(2+) as a cofactor.

It carries out the reaction adenosine + H2O + H(+) = inosine + NH4(+). The enzyme catalyses 2'-deoxyadenosine + H2O + H(+) = 2'-deoxyinosine + NH4(+). In terms of biological role, catalyzes the hydrolytic deamination of adenosine and 2-deoxyadenosine. This chain is Adenosine deaminase, found in Shewanella denitrificans (strain OS217 / ATCC BAA-1090 / DSM 15013).